The sequence spans 486 residues: Glucose-6-phosphate 1-dehydrogenase (486 aa).

Residues 13–20 (GGTGDLAK), R47, 86–87 (DV), and K149 each bind NADP(+). H179, K183, E217, and D236 together coordinate substrate. H241 serves as the catalytic Proton acceptor. K339 and K344 together coordinate substrate.

Belongs to the glucose-6-phosphate dehydrogenase family. As to quaternary structure, homodimer.

The enzyme catalyses D-glucose 6-phosphate + NAD(+) = 6-phospho-D-glucono-1,5-lactone + NADH + H(+). It catalyses the reaction D-glucose 6-phosphate + NADP(+) = 6-phospho-D-glucono-1,5-lactone + NADPH + H(+). Its pathway is carbohydrate degradation; pentose phosphate pathway; D-ribulose 5-phosphate from D-glucose 6-phosphate (oxidative stage): step 1/3. Its function is as follows. Catalyzes the oxidation of glucose 6-phosphate to 6-phosphogluconolactone. Can utilize either NADP(+) or NAD(+). This is Glucose-6-phosphate 1-dehydrogenase from Leuconostoc mesenteroides.